The following is a 141-amino-acid chain: Envelope protein A28 homolog (141 aa).

Residues 1-21 (MNPTSIVLIVIATVAVCLIIM) traverse the membrane as a helical; Signal-anchor for type II membrane protein segment. Residues 22–141 (QIYYIYENYD…QDCIFLKSVI (120 aa)) lie on the Virion surface side of the membrane.

It belongs to the poxviridae A28 protein family. Post-translationally, contains two intramolecular disulfide bonds. They are created by the viral disulfide bond formation pathway, a poxvirus-specific pathway that operates on the cytoplasmic side of the MV membranes.

Its subcellular location is the virion membrane. Functionally, envelope protein required for virus entry into host cell and for cell-cell fusion (syncytium formation). This is Envelope protein A28 homolog from Erythrocebus patas (Red guenon).